A 268-amino-acid polypeptide reads, in one-letter code: Tryptophan synthase alpha chain (268 aa).

Residues glutamate 49 and aspartate 60 each act as proton acceptor in the active site.

The protein belongs to the TrpA family. In terms of assembly, tetramer of two alpha and two beta chains.

The catalysed reaction is (1S,2R)-1-C-(indol-3-yl)glycerol 3-phosphate + L-serine = D-glyceraldehyde 3-phosphate + L-tryptophan + H2O. The protein operates within amino-acid biosynthesis; L-tryptophan biosynthesis; L-tryptophan from chorismate: step 5/5. Functionally, the alpha subunit is responsible for the aldol cleavage of indoleglycerol phosphate to indole and glyceraldehyde 3-phosphate. The sequence is that of Tryptophan synthase alpha chain from Vibrio vulnificus (strain YJ016).